The following is a 393-amino-acid chain: Uroporphyrinogen decarboxylase, chloroplastic (393 aa).

Residues 1–64 (MATACPPLSL…AGERNQREEV (64 aa)) form a disordered region. The span at 23 to 37 (AGPNAGSSRPSAAAP) shows a compositional bias: low complexity. The span at 38–50 (SERRSWRRPRPDG) shows a compositional bias: basic and acidic residues. Residues 73–77 (RQAGR), F92, S122, D123, Y200, S255, and H370 contribute to the substrate site.

This sequence belongs to the uroporphyrinogen decarboxylase family. As to quaternary structure, homodimer.

The protein localises to the plastid. The protein resides in the chloroplast. It catalyses the reaction uroporphyrinogen III + 4 H(+) = coproporphyrinogen III + 4 CO2. It participates in porphyrin-containing compound metabolism; protoporphyrin-IX biosynthesis; coproporphyrinogen-III from 5-aminolevulinate: step 4/4. Catalyzes the decarboxylation of four acetate groups of uroporphyrinogen-III to yield coproporphyrinogen-III. The polypeptide is Uroporphyrinogen decarboxylase, chloroplastic (LES22) (Zea mays (Maize)).